The following is a 107-amino-acid chain: Protein TAP1 (107 aa).

The N-terminal stretch at 1–23 is a signal peptide; sequence MESKRVDVLVGLMLIMAIFGVHS.

In terms of tissue distribution, stamen.

The chain is Protein TAP1 (TAP1) from Antirrhinum majus (Garden snapdragon).